Here is a 72-residue protein sequence, read N- to C-terminus: UPF0270 protein YheU (72 aa).

Belongs to the UPF0270 family.

In Shigella dysenteriae serotype 1 (strain Sd197), this protein is UPF0270 protein YheU.